The following is a 466-amino-acid chain: Soluble pyridine nucleotide transhydrogenase (466 aa).

An FAD-binding site is contributed by 36–45 (ERYQNVGGGC).

This sequence belongs to the class-I pyridine nucleotide-disulfide oxidoreductase family. Homooligomer; probable homooctamer. The cofactor is FAD.

It localises to the cytoplasm. The enzyme catalyses NAD(+) + NADPH = NADH + NADP(+). Functionally, conversion of NADPH, generated by peripheral catabolic pathways, to NADH, which can enter the respiratory chain for energy generation. The sequence is that of Soluble pyridine nucleotide transhydrogenase from Escherichia coli O6:H1 (strain CFT073 / ATCC 700928 / UPEC).